The chain runs to 164 residues: Endoribonuclease YbeY (164 aa).

Zn(2+)-binding residues include His-114, His-118, and His-124.

This sequence belongs to the endoribonuclease YbeY family. Zn(2+) is required as a cofactor.

It is found in the cytoplasm. In terms of biological role, single strand-specific metallo-endoribonuclease involved in late-stage 70S ribosome quality control and in maturation of the 3' terminus of the 16S rRNA. In Mycoplasmoides gallisepticum (strain R(low / passage 15 / clone 2)) (Mycoplasma gallisepticum), this protein is Endoribonuclease YbeY.